Consider the following 1079-residue polypeptide: DNA ligase 4 (1079 aa).

A disordered region spans residues 1–20 (MAVHAPYNHAPPPTQEINGQ). Residues E295, K297, L298, R302, E357, F395, E460, K465, K482, and K484 each coordinate ATP. Residue K297 is the N6-AMP-lysine intermediate of the active site. E357 lines the Mg(2+) pocket. E460 contributes to the Mg(2+) binding site. The region spanning 699-789 (VETSIFSDMT…TALPFLKEFL (91 aa)) is the BRCT 1 domain. The segment covering 838-847 (DGEDKDEIDV) has biased composition (acidic residues). A disordered region spans residues 838 to 942 (DGEDKDEIDV…SDVGVNGDDY (105 aa)). Basic and acidic residues-rich tracts occupy residues 848-878 (EESR…KKLQ) and 900-914 (MSLK…ERSR). In terms of domain architecture, BRCT 2 spans 968-1078 (DEDRIFYHLA…TLLDEDLYKP (111 aa)).

The protein belongs to the ATP-dependent DNA ligase family. The cofactor is Mg(2+).

Its subcellular location is the nucleus. It carries out the reaction ATP + (deoxyribonucleotide)n-3'-hydroxyl + 5'-phospho-(deoxyribonucleotide)m = (deoxyribonucleotide)n+m + AMP + diphosphate.. DNA ligase involved in DNA non-homologous end joining (NHEJ); required for double-strand break (DSB) repair. This Cryptococcus neoformans var. neoformans serotype D (strain JEC21 / ATCC MYA-565) (Filobasidiella neoformans) protein is DNA ligase 4 (LIG4).